The chain runs to 281 residues: Elongation factor Ts (281 aa).

Residues 79–82 (TDFV) form an involved in Mg(2+) ion dislocation from EF-Tu region.

It belongs to the EF-Ts family.

It is found in the cytoplasm. Associates with the EF-Tu.GDP complex and induces the exchange of GDP to GTP. It remains bound to the aminoacyl-tRNA.EF-Tu.GTP complex up to the GTP hydrolysis stage on the ribosome. The polypeptide is Elongation factor Ts (Wolbachia pipientis subsp. Culex pipiens (strain wPip)).